A 252-amino-acid chain; its full sequence is Osmotin-like protein (252 aa).

Positions 1 to 24 (MASSSAKILLPLSLLFTLLSLSQS) are cleaved as a signal peptide.

The protein localises to the secreted. It localises to the cell wall. This Solanum lycopersicum (Tomato) protein is Osmotin-like protein.